A 279-amino-acid polypeptide reads, in one-letter code: Zinc finger CCCH domain-containing protein 42 (279 aa).

The segment at 11–77 is disordered; the sequence is SDHRSSSTPM…KAAVEPQEYP (67 aa). Low complexity predominate over residues 16–39; the sequence is SSTPMATTTSSSASDPAAISPTPS. 3 C3H1-type zinc fingers span residues 79 to 107, 120 to 148, and 186 to 214; these read RPGVPDCSYYVEFGSCKFGMRCLYNHPAK, RPGEHDCLHYLRFGRCKYGMNCRFNHPPD, and RPGTGLCSYYMNRGICKFGSNCKFHHPNS.

In Oryza sativa subsp. japonica (Rice), this protein is Zinc finger CCCH domain-containing protein 42.